A 195-amino-acid polypeptide reads, in one-letter code: A-type ATP synthase subunit E (195 aa).

Belongs to the V-ATPase E subunit family. In terms of assembly, has multiple subunits with at least A(3), B(3), C, D, E, F, H, I and proteolipid K(x).

It is found in the cell membrane. Functionally, component of the A-type ATP synthase that produces ATP from ADP in the presence of a proton gradient across the membrane. This is A-type ATP synthase subunit E from Staphylothermus marinus (strain ATCC 43588 / DSM 3639 / JCM 9404 / F1).